A 367-amino-acid chain; its full sequence is sn-glycerol-3-phosphate import ATP-binding protein UgpC (367 aa).

Positions 4–235 constitute an ABC transporter domain; sequence LSLRNVQKTY…PASTFVAGFI (232 aa). 37–44 contributes to the ATP binding site; it reads GPSGCGKS.

The protein belongs to the ABC transporter superfamily. sn-glycerol-3-phosphate importer (TC 3.A.1.1.3) family. The complex is composed of two ATP-binding proteins (UgpC), two transmembrane proteins (UgpA and UgpE) and a solute-binding protein (UgpB).

Its subcellular location is the cell inner membrane. The catalysed reaction is sn-glycerol 3-phosphate(out) + ATP + H2O = sn-glycerol 3-phosphate(in) + ADP + phosphate + H(+). In terms of biological role, part of the ABC transporter complex UgpBAEC involved in sn-glycerol-3-phosphate (G3P) import. Responsible for energy coupling to the transport system. The polypeptide is sn-glycerol-3-phosphate import ATP-binding protein UgpC (Cupriavidus metallidurans (strain ATCC 43123 / DSM 2839 / NBRC 102507 / CH34) (Ralstonia metallidurans)).